The primary structure comprises 69 residues: UPF0346 protein llmg_2280 (69 aa).

It belongs to the UPF0346 family.

The chain is UPF0346 protein llmg_2280 from Lactococcus lactis subsp. cremoris (strain MG1363).